The primary structure comprises 222 residues: Isoprenyl transferase (222 aa).

Residue D12 is part of the active site. D12 provides a ligand contact to Mg(2+). Substrate is bound by residues 13–16 (GNRR), W17, and 57–59 (STE). N60 serves as the catalytic Proton acceptor. Substrate-binding positions include W61, R63, R171, and 177 to 179 (RLS). Residue E190 participates in Mg(2+) binding.

The protein belongs to the UPP synthase family. As to quaternary structure, homodimer. It depends on Mg(2+) as a cofactor.

Its function is as follows. Catalyzes the condensation of isopentenyl diphosphate (IPP) with allylic pyrophosphates generating different type of terpenoids. The polypeptide is Isoprenyl transferase (uppS) (Campylobacter jejuni subsp. jejuni serotype O:2 (strain ATCC 700819 / NCTC 11168)).